Consider the following 43-residue polypeptide: uncharacterized protein (43 aa).

This is an uncharacterized protein from Schizosaccharomyces pombe (strain 972 / ATCC 24843) (Fission yeast).